The chain runs to 132 residues: Mini-ribonuclease 3 (132 aa).

Residue Asp-17 is part of the active site.

The protein belongs to the MrnC RNase family. As to quaternary structure, homodimer. The cofactor is Mg(2+).

It is found in the cytoplasm. Functionally, involved in correct processing of both the 5' and 3' ends of 23S rRNA precursor. Processes 30S rRNA precursor transcript even in absence of ribonuclease 3 (Rnc); Rnc processes 30S rRNA into smaller rRNA precursors. The polypeptide is Mini-ribonuclease 3 (Enterococcus faecalis (strain ATCC 700802 / V583)).